We begin with the raw amino-acid sequence, 325 residues long: Small ribosomal subunit protein RACK1 (325 aa).

7 WD repeats span residues 13–44, 61–91, 103–133, 147–179, 191–221, 232–261, and 291–321; these read AHTDVVTAIATPIDNSDMIVTASRDKSIILWH, GHSHFVQDVVLSSDGQFALSGSWDGELRLWD, GHTKDVLSVAFSIDNRQIVSASRDRTIKLWN, AHSDWVSCVRFSPSTPQPTIVSASWDRTVKVWN, GHSGYVNTVAVSPDGSLCASGGKDGVILLWD, DAGSIIHALCFSPNRYWLCAATESSIKIWD, and KKVIYCTSLNWSADGSTLFSGYTDGVVRVWG.

Belongs to the WD repeat G protein beta family. Ribosomal protein RACK1 subfamily.

Functionally, plays a role in hormone-mediated cell division. The protein is Small ribosomal subunit protein RACK1 (GB1) of Medicago sativa (Alfalfa).